The chain runs to 223 residues: Deoxyribose-phosphate aldolase 1 (223 aa).

Catalysis depends on Asp91, which acts as the Proton donor/acceptor. The active-site Schiff-base intermediate with acetaldehyde is Lys154. Lys183 (proton donor/acceptor) is an active-site residue.

Belongs to the DeoC/FbaB aldolase family. DeoC type 1 subfamily.

The protein resides in the cytoplasm. The catalysed reaction is 2-deoxy-D-ribose 5-phosphate = D-glyceraldehyde 3-phosphate + acetaldehyde. The protein operates within carbohydrate degradation; 2-deoxy-D-ribose 1-phosphate degradation; D-glyceraldehyde 3-phosphate and acetaldehyde from 2-deoxy-alpha-D-ribose 1-phosphate: step 2/2. In terms of biological role, catalyzes a reversible aldol reaction between acetaldehyde and D-glyceraldehyde 3-phosphate to generate 2-deoxy-D-ribose 5-phosphate. The chain is Deoxyribose-phosphate aldolase 1 from Bacillus licheniformis (strain ATCC 14580 / DSM 13 / JCM 2505 / CCUG 7422 / NBRC 12200 / NCIMB 9375 / NCTC 10341 / NRRL NRS-1264 / Gibson 46).